A 561-amino-acid polypeptide reads, in one-letter code: Cloacin (561 aa).

3 stretches are compositionally biased toward gly residues: residues 1 to 21 (MSGGDGRGPGNSGLGHNGGQA), 29 to 40 (SGKGGPSSGGGT), and 66 to 91 (FGNGGSKPGGNGGNSGNHSGSSGGGQ). Disordered regions lie at residues 1–93 (MSGG…GQSS), 254–273 (PKGIVAEKGDSRPAGFTAGG), 304–326 (VKQRQEEEKRRQQAWDAAHPEEG), 432–507 (KAAL…KRAR), and 530–561 (RASDGEHLGAFDPKTGKQVKGPDPKRNIKKYL). Positions 1–180 (MSGGDGRGPG…DTVTETPAST (180 aa)) are involved in the translocation of the protein across the cell membrane. Residues 200–420 (DERQHIAVVA…NAKLKAAQAS (221 aa)) are responsible for the receptor binding activity. 2 stretches are compositionally biased toward basic and acidic residues: residues 306-326 (QRQEEEKRRQQAWDAAHPEEG) and 440-494 (ESRK…EGKP). The tract at residues 421 to 561 (LNAMNDALSR…DPKRNIKKYL (141 aa)) is ribonuclease activity. Residues 540–561 (FDPKTGKQVKGPDPKRNIKKYL) form a binding of immunity protein region.

It belongs to the cloacin colicin family.

Inactivates ribosomes by hydrolyzing 16S RNA in 30S ribosomes at a specific site. Functionally, colicins are polypeptide toxins produced by and active against E.coli and closely related bacteria. This Escherichia coli protein is Cloacin (ccl).